A 448-amino-acid chain; its full sequence is Pre-mRNA-splicing factor SAD1 (448 aa).

An N-acetylmethionine modification is found at M1. The UBP-type; degenerate zinc finger occupies 27-124; the sequence is PNYAYLETVV…NSIKFAAYPT (98 aa). Residues C60, C63, H79, and H85 each coordinate Zn(2+). Residues 150–447 form the USP domain; the sequence is IGFTNAATYD…ETFIQVWEKQ (298 aa).

As to quaternary structure, component of the 45S U1.U2.U4/U6.U5 penta-snRNP particle, a subcomplex of the spliceosome.

It localises to the nucleus. Its function is as follows. Promotes the assembly of newly synthesized U4 snRNA into the U4/U6 snRNP particle. Required for splicing of pre-mRNA. The sequence is that of Pre-mRNA-splicing factor SAD1 (SAD1) from Saccharomyces cerevisiae (strain ATCC 204508 / S288c) (Baker's yeast).